The following is a 475-amino-acid chain: ISWI one complex protein 4 (475 aa).

S2 carries the post-translational modification Phosphoserine. Residue T9 is modified to Phosphothreonine. Disordered regions lie at residues 42 to 84 (VSVH…DFGE), 181 to 296 (EEEY…IKYH), and 454 to 475 (EMDR…KVGA). Phosphoserine occurs at positions 65 and 73. Composition is skewed to acidic residues over residues 72–84 (QSEE…DFGE), 181–193 (EEEY…EENE), and 241–252 (ASEEEEEEEEEK). At S242 the chain carries Phosphoserine. The segment covering 259 to 294 (KRPQRTKTKKVVVSKTKPNPKTKAKKEKPKPPKPIK) has biased composition (basic residues). The span at 456 to 475 (DREKPSFSEDVKEEESKVGA) shows a compositional bias: basic and acidic residues.

As to quaternary structure, component of the ISW1B complex, which at least consists of ISW1, IOC2 and IOC4.

The protein resides in the nucleus. In terms of biological role, functions as a component of the ISW1B complex, which acts in remodeling the chromatin by catalyzing an ATP-dependent alteration in the structure of nucleosomal DNA. The ISW1B complex acts within coding regions to control the amount of RNA polymerase II released into productive elongation and to coordinate elongation with termination and pre-mRNA processing. The chain is ISWI one complex protein 4 (IOC4) from Saccharomyces cerevisiae (strain ATCC 204508 / S288c) (Baker's yeast).